The chain runs to 180 residues: Inosine/xanthosine triphosphatase (180 aa).

8–13 is a binding site for substrate; it reads TTNPAK. Positions 38 and 68 each coordinate Mg(2+). 68-69 contributes to the substrate binding site; sequence EA.

This sequence belongs to the YjjX NTPase family. Homodimer. Requires Mg(2+) as cofactor. It depends on Mn(2+) as a cofactor.

It catalyses the reaction XTP + H2O = XDP + phosphate + H(+). The enzyme catalyses ITP + H2O = IDP + phosphate + H(+). Phosphatase that hydrolyzes non-canonical purine nucleotides such as XTP and ITP to their respective diphosphate derivatives. Probably excludes non-canonical purines from DNA/RNA precursor pool, thus preventing their incorporation into DNA/RNA and avoiding chromosomal lesions. In Yersinia pseudotuberculosis serotype IB (strain PB1/+), this protein is Inosine/xanthosine triphosphatase.